Here is a 325-residue protein sequence, read N- to C-terminus: Putative [LysW]-lysine/[LysW]-ornithine hydrolase (325 aa).

Residue histidine 66 coordinates Zn(2+). The active site involves aspartate 68. A Zn(2+)-binding site is contributed by aspartate 90. The active-site Proton acceptor is glutamate 117. Residues glutamate 118, glutamate 139, and histidine 297 each coordinate Zn(2+).

It belongs to the peptidase M20A family. LysK subfamily. Zn(2+) is required as a cofactor. The cofactor is Co(2+).

Its subcellular location is the cytoplasm. It carries out the reaction [amino-group carrier protein]-C-terminal-gamma-(L-lysyl)-L-glutamate + H2O = [amino-group carrier protein]-C-terminal-L-glutamate + L-lysine. The enzyme catalyses [amino-group carrier protein]-C-terminal-gamma-(L-ornithyl)-L-glutamate + H2O = [amino-group carrier protein]-C-terminal-L-glutamate + L-ornithine. It functions in the pathway amino-acid biosynthesis; L-lysine biosynthesis via AAA pathway; L-lysine from L-alpha-aminoadipate (Thermus route): step 5/5. The protein operates within amino-acid biosynthesis; L-arginine biosynthesis. Its function is as follows. Catalyzes the release of L-lysine from [LysW]-gamma-L-lysine and the release of L-ornithine from [LysW]-L-ornithine. The protein is Putative [LysW]-lysine/[LysW]-ornithine hydrolase of Pyrococcus horikoshii (strain ATCC 700860 / DSM 12428 / JCM 9974 / NBRC 100139 / OT-3).